A 92-amino-acid polypeptide reads, in one-letter code: Small ribosomal subunit protein uS19c (92 aa).

Belongs to the universal ribosomal protein uS19 family.

The protein resides in the plastid. It localises to the chloroplast. In terms of biological role, protein S19 forms a complex with S13 that binds strongly to the 16S ribosomal RNA. This is Small ribosomal subunit protein uS19c from Guizotia abyssinica (Niger).